A 317-amino-acid polypeptide reads, in one-letter code: Transcription initiation factor IIB 3 (317 aa).

The segment covering 1–14 (MERATREREKEQRE) has biased composition (basic and acidic residues). The interval 1–25 (MERATREREKEQREQAQTNDEAQQC) is disordered. The TFIIB-type zinc finger occupies 21–50 (EAQQCPECNSANVITDQSERVCEDCGLVLE). Zn(2+) is bound by residues C25, C28, C42, and C45. Positions 62–83 (AFNSSERDQKSRVGAPTTKTMH) are disordered. 2 tandem repeats follow at residues 136 to 219 (SEID…AQEL) and 230 to 311 (EYLP…EQIE).

It belongs to the TFIIB family.

In terms of biological role, stabilizes TBP binding to an archaeal box-A promoter. Also responsible for recruiting RNA polymerase II to the pre-initiation complex (DNA-TBP-TFIIB). This is Transcription initiation factor IIB 3 from Halobacterium salinarum (strain ATCC 700922 / JCM 11081 / NRC-1) (Halobacterium halobium).